The chain runs to 336 residues: Dihydroorotate dehydrogenase (quinone) (336 aa).

FMN contacts are provided by residues Ala-62–Lys-66 and Thr-86. Residue Lys-66 participates in substrate binding. Asn-111–Phe-115 is a substrate binding site. FMN contacts are provided by Asn-139 and Asn-172. Substrate is bound at residue Asn-172. The Nucleophile role is filled by Ser-175. Substrate is bound at residue Asn-177. Positions 217 and 245 each coordinate FMN. Residue Asn-246–Thr-247 participates in substrate binding. Residues Gly-268, Gly-297, and Tyr-318–Ser-319 contribute to the FMN site.

This sequence belongs to the dihydroorotate dehydrogenase family. Type 2 subfamily. Monomer. It depends on FMN as a cofactor.

It localises to the cell membrane. The catalysed reaction is (S)-dihydroorotate + a quinone = orotate + a quinol. The protein operates within pyrimidine metabolism; UMP biosynthesis via de novo pathway; orotate from (S)-dihydroorotate (quinone route): step 1/1. In terms of biological role, catalyzes the conversion of dihydroorotate to orotate with quinone as electron acceptor. The chain is Dihydroorotate dehydrogenase (quinone) from Yersinia pseudotuberculosis serotype O:1b (strain IP 31758).